Reading from the N-terminus, the 463-residue chain is Elongation factor 1-alpha 2 (463 aa).

Position 2 is a n,N,N-trimethylglycine (Gly-2). The tr-type G domain maps to 5 to 242 (KTHINIVVIG…DTILPPTRPT (238 aa)). The tract at residues 14–21 (GHVDSGKS) is G1. The GTP site is built by Asp-17, Ser-18, Gly-19, Lys-20, Ser-21, and Thr-22. Asp-17 contributes to the Mg(2+) binding site. An N6,N6,N6-trimethyllysine; alternate modification is found at Lys-36. At Lys-36 the chain carries N6,N6-dimethyllysine; alternate. At Lys-36 the chain carries N6-methyllysine; alternate. Residue Lys-55 is modified to N6,N6,N6-trimethyllysine. The residue at position 55 (Lys-55) is an N6,N6-dimethyllysine. The G2 stretch occupies residues 70–74 (GITID). Lys-79 carries the post-translational modification N6,N6,N6-trimethyllysine. Residues 91 to 94 (DAPG) are G3. GTP contacts are provided by Asn-153, Lys-154, and Asp-156. Residues 153–156 (NKMD) are G4. The residue at position 163 (Ser-163) is a Phosphoserine. Position 165 is an N6,N6-dimethyllysine; alternate (Lys-165). An N6-methyllysine; alternate modification is found at Lys-165. Residue Lys-165 is modified to N6,N6,N6-trimethyllysine; alternate; by EEF1AKMT3. Lys-179 is subject to N6-acetyllysine. The GTP site is built by Ser-194, Gly-195, and Trp-196. The G5 stretch occupies residues 194-196 (SGW). Position 224 is a phosphoserine (Ser-224). Thr-239 carries the post-translational modification Phosphothreonine. Glu-301 and Glu-374 each carry 5-glutamyl glycerylphosphorylethanolamine. Position 439 is an N6-acetyllysine (Lys-439). The segment at 444–463 (KSGGAGKVTKSAQKAQKAGK) is disordered.

The protein belongs to the TRAFAC class translation factor GTPase superfamily. Classic translation factor GTPase family. EF-Tu/EF-1A subfamily. Homodimer; arranged in a 'head to tail' dimer configuration. In terms of processing, trimethylated at Lys-165 by EEF1AKMT3. Mono-, di-, and trimethylated at Lys-36 by EEF1AKMT4; trimethylated form is predominant. Methylation by EEF1AKMT4 contributes to the fine-tuning of translation rates for a subset of tRNAs. Trimethylated at the N-terminus and dimethylated at Lys-55 by METTL13.

It localises to the endoplasmic reticulum membrane. The enzyme catalyses GTP + H2O = GDP + phosphate + H(+). In terms of biological role, translation elongation factor that catalyzes the GTP-dependent binding of aminoacyl-tRNA (aa-tRNA) to the A-site of ribosomes during the elongation phase of protein synthesis. Base pairing between the mRNA codon and the aa-tRNA anticodon promotes GTP hydrolysis, releasing the aa-tRNA from EEF1A1 and allowing its accommodation into the ribosome. The growing protein chain is subsequently transferred from the P-site peptidyl tRNA to the A-site aa-tRNA, extending it by one amino acid through ribosome-catalyzed peptide bond formation. This chain is Elongation factor 1-alpha 2 (EEF1A2), found in Bos taurus (Bovine).